We begin with the raw amino-acid sequence, 420 residues long: Putative phosphate permease HI_1604 (420 aa).

12 helical membrane-spanning segments follow: residues 8–28, 49–69, 88–108, 112–132, 145–165, 185–205, 216–236, 250–270, 300–320, 343–363, 370–390, and 393–413; these read GSWL…GIGA, AIII…GEVT, ILAL…FIAT, WPVS…CITI, IVGS…AIFA, GPYY…KKGL, ETLI…HFYF, FGAV…AMAF, GGAL…VGLI, FAAQ…GLPI, VGAI…LTVI, and IISS…IIFY.

The protein belongs to the inorganic phosphate transporter (PiT) (TC 2.A.20) family.

The protein resides in the cell inner membrane. Functionally, potential transporter for phosphate. The protein is Putative phosphate permease HI_1604 of Haemophilus influenzae (strain ATCC 51907 / DSM 11121 / KW20 / Rd).